Consider the following 478-residue polypeptide: Protein nucleotidyltransferase YdiU (478 aa).

ATP is bound by residues Gly-84, Gly-86, Arg-87, Lys-107, Asp-119, Gly-120, Arg-170, and Arg-177. Catalysis depends on Asp-246, which acts as the Proton acceptor. Mg(2+)-binding residues include Asn-247 and Asp-256. ATP is bound at residue Asp-256.

This sequence belongs to the SELO family. Mg(2+) serves as cofactor. It depends on Mn(2+) as a cofactor.

The catalysed reaction is L-seryl-[protein] + ATP = 3-O-(5'-adenylyl)-L-seryl-[protein] + diphosphate. It catalyses the reaction L-threonyl-[protein] + ATP = 3-O-(5'-adenylyl)-L-threonyl-[protein] + diphosphate. The enzyme catalyses L-tyrosyl-[protein] + ATP = O-(5'-adenylyl)-L-tyrosyl-[protein] + diphosphate. It carries out the reaction L-histidyl-[protein] + UTP = N(tele)-(5'-uridylyl)-L-histidyl-[protein] + diphosphate. The catalysed reaction is L-seryl-[protein] + UTP = O-(5'-uridylyl)-L-seryl-[protein] + diphosphate. It catalyses the reaction L-tyrosyl-[protein] + UTP = O-(5'-uridylyl)-L-tyrosyl-[protein] + diphosphate. Its function is as follows. Nucleotidyltransferase involved in the post-translational modification of proteins. It can catalyze the addition of adenosine monophosphate (AMP) or uridine monophosphate (UMP) to a protein, resulting in modifications known as AMPylation and UMPylation. The polypeptide is Protein nucleotidyltransferase YdiU (Escherichia coli O157:H7).